A 63-amino-acid polypeptide reads, in one-letter code: Small ribosomal subunit protein bS21 (63 aa).

This sequence belongs to the bacterial ribosomal protein bS21 family.

The chain is Small ribosomal subunit protein bS21 from Syntrophus aciditrophicus (strain SB).